Here is a 281-residue protein sequence, read N- to C-terminus: MCAAAPRGGGRAARRLGAATAGSRVPSAAPRYSRRTRRVPIAYEAEPKPESPGPKWEPENWQQQLERIREMRRHRDAPVDEMGVDKCYDTSAPPQVMRYQVLLSLMLSSQTKDQVTSAAMLRLRQRGLTVDSILQMDDATLGQIIYPVGFWRNKVKYIKQTTAILKQKYGGDIPGTVEELVKLPGVGPKMAHLAMNIAWNSVSGIAVDTHVHRITNRLKWVKKETRYPEETRVALEDWLPRDLWREINWLLVGFGQQTCLPVNPRCKECLNQDICPTAKRF.

A mitochondrion-targeting transit peptide spans 1 to 17; it reads MCAAAPRGGGRAARRLG. The disordered stretch occupies residues 1-60; that stretch reads MCAAAPRGGGRAARRLGAATAGSRVPSAAPRYSRRTRRVPIAYEAEPKPESPGPKWEPEN. Low complexity predominate over residues 15-24; the sequence is RLGAATAGSR. The HhH domain maps to 168 to 192; the sequence is KYGGDIPGTVEELVKLPGVGPKMAH. The Nucleophile; for N-glycosylase activity role is filled by Lys189. [4Fe-4S] cluster-binding residues include Cys259, Cys266, Cys269, and Cys275.

Belongs to the Nth/MutY family. [4Fe-4S] cluster is required as a cofactor.

It is found in the nucleus. Its subcellular location is the mitochondrion. The enzyme catalyses 2'-deoxyribonucleotide-(2'-deoxyribose 5'-phosphate)-2'-deoxyribonucleotide-DNA = a 3'-end 2'-deoxyribonucleotide-(2,3-dehydro-2,3-deoxyribose 5'-phosphate)-DNA + a 5'-end 5'-phospho-2'-deoxyribonucleoside-DNA + H(+). Functionally, bifunctional DNA N-glycosylase with associated apurinic/apyrimidinic (AP) lyase function that catalyzes the first step in base excision repair (BER), the primary repair pathway for the repair of oxidative DNA damage. The DNA N-glycosylase activity releases the damaged DNA base from DNA by cleaving the N-glycosidic bond, leaving an AP site. The AP lyase activity cleaves the phosphodiester bond 3' to the AP site by a beta-elimination. Primarily recognizes and repairs oxidative base damage of pyrimidines. The sequence is that of Endonuclease III-like protein 1 from Gallus gallus (Chicken).